Reading from the N-terminus, the 29-residue chain is GDACGETCFTGICFTAGCSCNPWPTCTRN.

Residues 1–29 constitute a cross-link (cyclopeptide (Gly-Asn)); that stretch reads GDACGETCFTGICFTAGCSCNPWPTCTRN. 3 disulfide bridges follow: C4/C18, C8/C20, and C13/C26.

In terms of processing, this is a cyclic peptide. As to expression, expressed in leaf, fruit, pedical and stem but not in root (at protein level).

Its function is as follows. Probably participates in a plant defense mechanism. The polypeptide is Chassatide C1 (Chassalia chartacea (Chassalia curviflora)).